Here is a 217-residue protein sequence, read N- to C-terminus: 3,4-dihydroxy-2-butanone 4-phosphate synthase (217 aa).

D-ribulose 5-phosphate is bound by residues Arg-37–Glu-38, Asp-42, Arg-150–Thr-154, and Glu-174. Glu-38 serves as a coordination point for Mg(2+). A Mg(2+)-binding site is contributed by His-153.

Belongs to the DHBP synthase family. In terms of assembly, homodimer. The cofactor is Mg(2+). Mn(2+) serves as cofactor.

The catalysed reaction is D-ribulose 5-phosphate = (2S)-2-hydroxy-3-oxobutyl phosphate + formate + H(+). Its pathway is cofactor biosynthesis; riboflavin biosynthesis; 2-hydroxy-3-oxobutyl phosphate from D-ribulose 5-phosphate: step 1/1. Catalyzes the conversion of D-ribulose 5-phosphate to formate and 3,4-dihydroxy-2-butanone 4-phosphate. This chain is 3,4-dihydroxy-2-butanone 4-phosphate synthase, found in Shewanella loihica (strain ATCC BAA-1088 / PV-4).